A 408-amino-acid chain; its full sequence is BRCA1-A complex subunit Abraxas 1 (408 aa).

One can recognise an MPN domain in the interval 7 to 155 (TAVISGFVFG…KSTHRLEYAL (149 aa)). Residues 210–272 (ALAEVNRISD…MEEKGNKVSE (63 aa)) adopt a coiled-coil conformation. The segment at 335 to 408 (HRRQAGKRKA…EVSRSKSPTF (74 aa)) is disordered. Over residues 337–358 (RQAGKRKAHSKQLGKTSTKKSR) the composition is skewed to basic residues. A compositionally biased stretch (polar residues) spans 394 to 408 (QSLNVEVSRSKSPTF). Ser-405 carries the phosphoserine modification. The pSXXF motif motif lies at 405-408 (SPTF).

This sequence belongs to the FAM175 family. Abraxas subfamily. As to quaternary structure, component of the BRCA1-A complex. Component of the BRISC complex. Homodimer. Interacts directly (when phosphorylated at Ser-405) with brca1. The phosphorylated homodimer can interact directly with two brca1 chains, giving rise to a heterotetramer. In terms of processing, phosphorylation of Ser-405 of the pSXXF motif by ATM or ATR constitutes a specific recognition motif for the BRCT domain of BRCA1.

The protein localises to the nucleus. Functionally, involved in DNA damage response and double-strand break (DSB) repair. Component of the BRCA1-A complex, acting as a central scaffold protein that assembles the various components of the complex and mediates the recruitment of brca1. The BRCA1-A complex specifically recognizes 'Lys-63'-linked ubiquitinated histones H2A and H2AX at DNA lesion sites, leading to target the brca1-bard1 heterodimer to sites of DNA damage at DSBs. This complex also possesses deubiquitinase activity that specifically removes 'Lys-63'-linked ubiquitin on histones H2A and H2AX. The polypeptide is BRCA1-A complex subunit Abraxas 1 (Xenopus laevis (African clawed frog)).